A 485-amino-acid chain; its full sequence is Tektin-5 (485 aa).

Coiled-coil stretches lie at residues 113–185 (SRLT…EVNC), 225–251 (QQQM…ALER), 342–385 (FNAR…MAKE), and 423–443 (DDTL…LQLL).

Belongs to the tektin family. In terms of assembly, microtubule inner protein component of sperm flagellar doublet microtubules. Interacts with TEKT3. Ubiquitinated, leading to its degradation. Deubiquitinated by USP16, promoting its stability.

The protein resides in the cytoplasm. The protein localises to the cytoskeleton. It is found in the flagellum axoneme. Its function is as follows. Sperm-specific microtubule inner protein (MIP) part of the dynein-decorated doublet microtubules (DMTs) in flagellar axoneme. Forms an extensive interaction network in different conformations that reinforces the helix bundle composed by other tektin proteins (TEKT1 to TEKT4) and MIPs to anchor the tektin bundle onto the tubulin wall of A-tubule of the sperm flagellum. In Macaca fascicularis (Crab-eating macaque), this protein is Tektin-5 (TEKT5).